The sequence spans 1316 residues: DNA-directed RNA polymerase subunit beta' (1316 aa).

Residues Cys60, Cys62, Cys75, and Cys78 each coordinate Zn(2+). Mg(2+) is bound by residues Asp535, Asp537, and Asp539. Residues Cys891, Cys968, Cys975, and Cys978 each coordinate Zn(2+).

This sequence belongs to the RNA polymerase beta' chain family. As to quaternary structure, the RNAP catalytic core consists of 2 alpha, 1 beta, 1 beta' and 1 omega subunit. When a sigma factor is associated with the core the holoenzyme is formed, which can initiate transcription. Mg(2+) is required as a cofactor. Requires Zn(2+) as cofactor.

The catalysed reaction is RNA(n) + a ribonucleoside 5'-triphosphate = RNA(n+1) + diphosphate. In terms of biological role, DNA-dependent RNA polymerase catalyzes the transcription of DNA into RNA using the four ribonucleoside triphosphates as substrates. The sequence is that of DNA-directed RNA polymerase subunit beta' from Mycobacterium marinum (strain ATCC BAA-535 / M).